A 258-amino-acid polypeptide reads, in one-letter code: Phosphate import ATP-binding protein PstB 1 (258 aa).

The 243-residue stretch at 5–247 folds into the ABC transporter domain; the sequence is LDLTDVNIYY…EKIFSNPNQK (243 aa). Position 37-44 (37-44) interacts with ATP; that stretch reads GPSGCGKT.

This sequence belongs to the ABC transporter superfamily. Phosphate importer (TC 3.A.1.7) family. As to quaternary structure, the complex is composed of two ATP-binding proteins (PstB), two transmembrane proteins (PstC and PstA) and a solute-binding protein (PstS).

The protein localises to the cell membrane. It carries out the reaction phosphate(out) + ATP + H2O = ADP + 2 phosphate(in) + H(+). Its function is as follows. Part of the ABC transporter complex PstSACB involved in phosphate import. Responsible for energy coupling to the transport system. This Mycobacterium tuberculosis (strain CDC 1551 / Oshkosh) protein is Phosphate import ATP-binding protein PstB 1.